We begin with the raw amino-acid sequence, 357 residues long: tRNA N6-adenosine threonylcarbamoyltransferase (357 aa).

His-120 and His-124 together coordinate Fe cation. Residues 143–147, Asp-176, Gly-189, and Asn-289 each bind substrate; that span reads LVSGG. Fe cation is bound at residue Asp-317.

Belongs to the KAE1 / TsaD family. Fe(2+) is required as a cofactor.

It localises to the cytoplasm. The enzyme catalyses L-threonylcarbamoyladenylate + adenosine(37) in tRNA = N(6)-L-threonylcarbamoyladenosine(37) in tRNA + AMP + H(+). Required for the formation of a threonylcarbamoyl group on adenosine at position 37 (t(6)A37) in tRNAs that read codons beginning with adenine. Is involved in the transfer of the threonylcarbamoyl moiety of threonylcarbamoyl-AMP (TC-AMP) to the N6 group of A37, together with TsaE and TsaB. TsaD likely plays a direct catalytic role in this reaction. This Polynucleobacter necessarius subsp. necessarius (strain STIR1) protein is tRNA N6-adenosine threonylcarbamoyltransferase.